Consider the following 758-residue polypeptide: General transcription and DNA repair factor IIH helicase subunit XPD (758 aa).

One can recognise a Helicase ATP-binding domain in the interval 7-285; that stretch reads DVTVYFPYDN…TDAGRLRAEY (279 aa). 42-49 is a binding site for ATP; it reads MPTGTGKT. The [4Fe-4S] cluster site is built by C116, C134, C155, and C190. Residues 234–238 carry the DEAH box motif; that stretch reads DEAHN.

The protein belongs to the helicase family. RAD3/XPD subfamily. As to quaternary structure, component of the 7-subunit TFIIH core complex composed of XPB, XPD, TFB1/GTF2H1, GTF2H2/P44, TFB4/GTF2H3, TFB2/GTF2H4 and TFB5/GTF2H5, which is active in NER. The core complex associates with the 3-subunit CDK-activating kinase (CAK) module composed of CYCH1/cyclin H1, CDKD and MAT1/At4g30820 to form the 10-subunit holoenzyme (holo-TFIIH) active in transcription. Interacts with GTF2H2/p44. [4Fe-4S] cluster is required as a cofactor. In terms of tissue distribution, expressed at low levels in all tissues.

It is found in the nucleus. It catalyses the reaction Couples ATP hydrolysis with the unwinding of duplex DNA at the replication fork by translocating in the 5'-3' direction. This creates two antiparallel DNA single strands (ssDNA). The leading ssDNA polymer is the template for DNA polymerase III holoenzyme which synthesizes a continuous strand.. The catalysed reaction is ATP + H2O = ADP + phosphate + H(+). Its function is as follows. ATP-dependent 5'-3' DNA helicase, component of the general transcription and DNA repair factor IIH (TFIIH) core complex, which is involved in general and transcription-coupled nucleotide excision repair (NER) of damaged DNA and, when complexed to CDK-activating kinase (CAK), involved in transcription by RNA polymerase II. In NER, TFIIH acts by opening DNA around the lesion to allow the excision of the damaged oligonucleotide and its replacement by a new DNA fragment. The ATP-dependent helicase activity of XPD is required for DNA opening. In transcription, TFIIH has an essential role in transcription initiation. When the pre-initiation complex (PIC) has been established, TFIIH is required for promoter opening and promoter escape. Phosphorylation of the C-terminal tail (CTD) of the largest subunit of RNA polymerase II by the kinase module CAK controls the initiation of transcription. XPD acts by forming a bridge between CAK and the core-TFIIH complex. Essential during plant growth. May negatively regulate a common response program mediated by UV damage and heat stress, that leads to tissue death and reduced chloroplast function. This is General transcription and DNA repair factor IIH helicase subunit XPD from Arabidopsis thaliana (Mouse-ear cress).